The sequence spans 243 residues: 2-C-methyl-D-erythritol 4-phosphate cytidylyltransferase (243 aa).

It belongs to the IspD/TarI cytidylyltransferase family. IspD subfamily. As to quaternary structure, homodimer.

The catalysed reaction is 2-C-methyl-D-erythritol 4-phosphate + CTP + H(+) = 4-CDP-2-C-methyl-D-erythritol + diphosphate. The protein operates within isoprenoid biosynthesis; isopentenyl diphosphate biosynthesis via DXP pathway; isopentenyl diphosphate from 1-deoxy-D-xylulose 5-phosphate: step 2/6. Catalyzes the formation of 4-diphosphocytidyl-2-C-methyl-D-erythritol from CTP and 2-C-methyl-D-erythritol 4-phosphate (MEP). The sequence is that of 2-C-methyl-D-erythritol 4-phosphate cytidylyltransferase from Photorhabdus laumondii subsp. laumondii (strain DSM 15139 / CIP 105565 / TT01) (Photorhabdus luminescens subsp. laumondii).